A 442-amino-acid polypeptide reads, in one-letter code: UDP-N-acetylmuramoylalanine--D-glutamate ligase (442 aa).

Residue 115–121 (GSNGKST) participates in ATP binding.

The protein belongs to the MurCDEF family.

It localises to the cytoplasm. The enzyme catalyses UDP-N-acetyl-alpha-D-muramoyl-L-alanine + D-glutamate + ATP = UDP-N-acetyl-alpha-D-muramoyl-L-alanyl-D-glutamate + ADP + phosphate + H(+). It functions in the pathway cell wall biogenesis; peptidoglycan biosynthesis. In terms of biological role, cell wall formation. Catalyzes the addition of glutamate to the nucleotide precursor UDP-N-acetylmuramoyl-L-alanine (UMA). In Vibrio vulnificus (strain YJ016), this protein is UDP-N-acetylmuramoylalanine--D-glutamate ligase.